Consider the following 563-residue polypeptide: Arginine--tRNA ligase (563 aa).

The 'HIGH' region motif lies at 121–131; sequence PNIAKPFSIGH.

It belongs to the class-I aminoacyl-tRNA synthetase family. Monomer.

Its subcellular location is the cytoplasm. It carries out the reaction tRNA(Arg) + L-arginine + ATP = L-arginyl-tRNA(Arg) + AMP + diphosphate. This is Arginine--tRNA ligase from Streptococcus pyogenes serotype M49 (strain NZ131).